The sequence spans 110 residues: Large ribosomal subunit protein uL22 (110 aa).

The protein belongs to the universal ribosomal protein uL22 family. In terms of assembly, part of the 50S ribosomal subunit.

Functionally, this protein binds specifically to 23S rRNA; its binding is stimulated by other ribosomal proteins, e.g. L4, L17, and L20. It is important during the early stages of 50S assembly. It makes multiple contacts with different domains of the 23S rRNA in the assembled 50S subunit and ribosome. Its function is as follows. The globular domain of the protein is located near the polypeptide exit tunnel on the outside of the subunit, while an extended beta-hairpin is found that lines the wall of the exit tunnel in the center of the 70S ribosome. The sequence is that of Large ribosomal subunit protein uL22 from Buchnera aphidicola subsp. Schizaphis graminum (strain Sg).